Here is a 236-residue protein sequence, read N- to C-terminus: 2,3,4,5-tetrahydropyridine-2,6-dicarboxylate N-acetyltransferase (236 aa).

Belongs to the transferase hexapeptide repeat family. DapH subfamily.

The enzyme catalyses (S)-2,3,4,5-tetrahydrodipicolinate + acetyl-CoA + H2O = L-2-acetamido-6-oxoheptanedioate + CoA. The protein operates within amino-acid biosynthesis; L-lysine biosynthesis via DAP pathway; LL-2,6-diaminopimelate from (S)-tetrahydrodipicolinate (acetylase route): step 1/3. Its function is as follows. Catalyzes the transfer of an acetyl group from acetyl-CoA to tetrahydrodipicolinate. This Clostridium botulinum (strain Eklund 17B / Type B) protein is 2,3,4,5-tetrahydropyridine-2,6-dicarboxylate N-acetyltransferase.